Consider the following 424-residue polypeptide: Tyrosine--tRNA ligase (424 aa).

Y37 contributes to the L-tyrosine binding site. The 'HIGH' region motif lies at 42 to 51; that stretch reads PTADSLHLGH. K144 is subject to N6-acetyllysine. Residues Y175 and Q179 each contribute to the L-tyrosine site. Residues 235 to 239 carry the 'KMSKS' region motif; the sequence is KFGKT. K238 contacts ATP. An S4 RNA-binding domain is found at 357 to 414; it reads ADLMQALVDSELQPSRGQARKTIASNAITINGEKQSDPEYFFKEEDRLFGRFTLLRRG.

The protein belongs to the class-I aminoacyl-tRNA synthetase family. TyrS type 1 subfamily. Homodimer.

It is found in the cytoplasm. It carries out the reaction tRNA(Tyr) + L-tyrosine + ATP = L-tyrosyl-tRNA(Tyr) + AMP + diphosphate + H(+). Its function is as follows. Catalyzes the attachment of tyrosine to tRNA(Tyr) in a two-step reaction: tyrosine is first activated by ATP to form Tyr-AMP and then transferred to the acceptor end of tRNA(Tyr). The sequence is that of Tyrosine--tRNA ligase from Shigella boydii serotype 4 (strain Sb227).